The chain runs to 274 residues: Oxidoreductase stcQ (274 aa).

Belongs to the avfA family.

It participates in mycotoxin biosynthesis; sterigmatocystin biosynthesis. Oxidoreductase; part of the gene cluster that mediates the biosynthesis of sterigmatocystin (ST), a polyketide-derived furanocoumarin which is part of the most toxic and carcinogenic compounds among the known mycotoxins. The first step in the biosynthesis of sterigmatocystin is the production of hexanoate by the fatty acid synthase (FAS) units stcJ and stcK. The polyketide backbone is assembled by the non-reducing polyketide synthase stcA by condensation of the starter hexanoyl-CoA and 7 malonyl-CoA extender units followed by cyclization and release of norsolorinic acid. Norsolorinic acid is the first stable intermediate in the biosynthesis of sterigmatocystin and is converted into averantin (AVN) by the ketoreductase stcE which reduces the hexanoate ketone to an alcohol. Averantin is then oxidized into 5'-hydroxyaverantin (HAVN) by the cytochrome P450 monooxygenase stcF. 5'-hydroxyaverantin is further converted to 5'-oxyaverantin (OAVN) by the 5'-hydroxyaverantin dehydrogenase stcG. The next step is the conversion of OAVN into averufin (AVF) which is catalyzed by a yet to be identified enzyme. The cytochrome P450 monooxygenase stcB and the flavin-binding monooxygenase stcW are both required for the conversion of averufin to 1-hydroxyversicolorone. The esterase stcI probably catalyzes the formation of versiconal hemiacetal acetate from 1-hydroxyversicolorone. The oxydoreductase stcN then probably catalyzes the biosynthetic step from versiconal to versicolorin B (VERB). The next step is performed by the versicolorin B desaturase stcL to produce versicolorin A (VERA). The ketoreductase stcU and the cytochrome P450 monooxygenase stcS are involved in the conversion of versicolorin A to demethylsterigmatocystin. The Baeyer-Villiger oxidas stcQ and the reductase stcR might be involved in the biosynthetic step from versicolorin A to demethylsterigmatocystin. The final step in the biosynthesis of sterigmatocystin is the methylation of demethylsterigmatocystin catalyzed by the methyltransferase stcP. The sequence is that of Oxidoreductase stcQ from Emericella nidulans (strain FGSC A4 / ATCC 38163 / CBS 112.46 / NRRL 194 / M139) (Aspergillus nidulans).